An 81-amino-acid polypeptide reads, in one-letter code: Large ribosomal subunit protein bL27 (81 aa).

Residues 1–11 (MATSKSGGSSK) are compositionally biased toward polar residues. Positions 1–23 (MATSKSGGSSKNGRDSISKRLGV) are disordered.

Belongs to the bacterial ribosomal protein bL27 family.

The polypeptide is Large ribosomal subunit protein bL27 (Borrelia garinii subsp. bavariensis (strain ATCC BAA-2496 / DSM 23469 / PBi) (Borreliella bavariensis)).